We begin with the raw amino-acid sequence, 213 residues long: A-type ATP synthase subunit D (213 aa).

Belongs to the V-ATPase D subunit family. As to quaternary structure, has multiple subunits with at least A(3), B(3), C, D, E, F, H, I and proteolipid K(x).

It is found in the cell membrane. Component of the A-type ATP synthase that produces ATP from ADP in the presence of a proton gradient across the membrane. This is A-type ATP synthase subunit D from Thermoplasma acidophilum (strain ATCC 25905 / DSM 1728 / JCM 9062 / NBRC 15155 / AMRC-C165).